A 441-amino-acid chain; its full sequence is Serine carboxypeptidase-like 3 (441 aa).

The first 30 residues, 1–30 (MASNYVFSVLRSLLLLIHTVFLGQHHVSSA), serve as a signal peptide directing secretion. 3 cysteine pairs are disulfide-bonded: Cys-88–Cys-331, Cys-252–Cys-266, and Cys-290–Cys-297. The N-linked (GlcNAc...) asparagine glycan is linked to Asn-109. Residue Ser-184 is part of the active site. N-linked (GlcNAc...) asparagine glycosylation is present at Asn-350. Asp-366 is a catalytic residue. N-linked (GlcNAc...) asparagine glycosylation occurs at Asn-382. His-419 is an active-site residue.

The protein belongs to the peptidase S10 family. Expressed in roots.

Its subcellular location is the secreted. Its function is as follows. Probable carboxypeptidase. This is Serine carboxypeptidase-like 3 (SCPL3) from Arabidopsis thaliana (Mouse-ear cress).